A 325-amino-acid chain; its full sequence is Tryptophan--tRNA ligase (325 aa).

Residues 9–11 (QPS) and 17–18 (GN) contribute to the ATP site. Residues 10–18 (PSGILHIGN) carry the 'HIGH' region motif. L-tryptophan is bound at residue D132. ATP-binding positions include 144-146 (GKD), V184, and 191-195 (KMSKS). A 'KMSKS' region motif is present at residues 191 to 195 (KMSKS).

The protein belongs to the class-I aminoacyl-tRNA synthetase family. In terms of assembly, homodimer.

The protein resides in the cytoplasm. The catalysed reaction is tRNA(Trp) + L-tryptophan + ATP = L-tryptophyl-tRNA(Trp) + AMP + diphosphate + H(+). In terms of biological role, catalyzes the attachment of tryptophan to tRNA(Trp). The sequence is that of Tryptophan--tRNA ligase from Fusobacterium nucleatum subsp. nucleatum (strain ATCC 25586 / DSM 15643 / BCRC 10681 / CIP 101130 / JCM 8532 / KCTC 2640 / LMG 13131 / VPI 4355).